Reading from the N-terminus, the 294-residue chain is Phosphatidylglycerol--prolipoprotein diacylglyceryl transferase (294 aa).

7 consecutive transmembrane segments (helical) span residues 21 to 41 (VSLH…LWLA), 60 to 80 (LLYV…VLFY), 96 to 116 (WDGG…MIWF), 124 to 144 (FFQV…LGRI), 199 to 219 (SQLY…NIFV), 226 to 246 (GSVS…VEFF), and 259 to 279 (ISMG…FMVW). Position 143 (arginine 143) interacts with a 1,2-diacyl-sn-glycero-3-phospho-(1'-sn-glycerol).

The protein belongs to the Lgt family.

Its subcellular location is the cell inner membrane. The enzyme catalyses L-cysteinyl-[prolipoprotein] + a 1,2-diacyl-sn-glycero-3-phospho-(1'-sn-glycerol) = an S-1,2-diacyl-sn-glyceryl-L-cysteinyl-[prolipoprotein] + sn-glycerol 1-phosphate + H(+). It participates in protein modification; lipoprotein biosynthesis (diacylglyceryl transfer). Catalyzes the transfer of the diacylglyceryl group from phosphatidylglycerol to the sulfhydryl group of the N-terminal cysteine of a prolipoprotein, the first step in the formation of mature lipoproteins. This Proteus mirabilis (strain HI4320) protein is Phosphatidylglycerol--prolipoprotein diacylglyceryl transferase.